Consider the following 351-residue polypeptide: Protein IQ-DOMAIN 27 (351 aa).

Residues 15–37 (KKSKDRSHVSGGDSVKGGDHSGD) form a disordered region. The calmodulin-binding stretch occupies residues 98–114 (EERWAAVKIQKVFRGSL). IQ domains are found at residues 99–127 (ERWA…GIVK) and 128–150 (LQAL…SIQT). Residues 191–198 (DRRTKIVE) carry the Nuclear localization signal motif. Over residues 299–310 (SFKAKVRSHSAP) the composition is skewed to basic residues. Residues 299–351 (SFKAKVRSHSAPRQRSERQRLSLDEVMASKSSVSGVSMSHQHPPRHSCSCDPL) form a disordered region. Basic and acidic residues predominate over residues 312–321 (QRSERQRLSL). Low complexity predominate over residues 324 to 337 (VMASKSSVSGVSMS).

It belongs to the IQD family. Binds to multiple calmodulin (CaM) in the presence of Ca(2+) and CaM-like proteins.

It localises to the nucleus. It is found in the nucleus envelope. The protein localises to the cytoplasm. Its subcellular location is the cytoskeleton. In terms of biological role, may be involved in cooperative interactions with calmodulins or calmodulin-like proteins. Recruits calmodulin proteins to microtubules, thus being a potential scaffold in cellular signaling and trafficking. May associate with nucleic acids and regulate gene expression at the transcriptional or post-transcriptional level. The polypeptide is Protein IQ-DOMAIN 27 (Arabidopsis thaliana (Mouse-ear cress)).